A 144-amino-acid chain; its full sequence is Large ribosomal subunit protein uL13 (144 aa).

The protein belongs to the universal ribosomal protein uL13 family. In terms of assembly, part of the 50S ribosomal subunit.

Its function is as follows. This protein is one of the early assembly proteins of the 50S ribosomal subunit, although it is not seen to bind rRNA by itself. It is important during the early stages of 50S assembly. The protein is Large ribosomal subunit protein uL13 of Magnetococcus marinus (strain ATCC BAA-1437 / JCM 17883 / MC-1).